Consider the following 120-residue polypeptide: Putative 15 kDa capsid protein (120 aa).

It localises to the virion. The polypeptide is Putative 15 kDa capsid protein (P15) (Orgyia pseudotsugata (Douglas-fir tussock moth)).